A 526-amino-acid chain; its full sequence is Na(+)/H(+) antiporter NhaB (526 aa).

Transmembrane regions (helical) follow at residues 25–45 (IIAF…IAGW), 52–72 (IFTL…LLLI), 89–109 (IVVN…IYFM), 139–159 (AFLS…AVGM), 204–224 (LMMH…VGEP), 240–260 (FFVR…ATTF), 305–325 (GFIG…VGLI), 355–375 (FTAL…QGLF), 391–411 (LVMF…VFVG), 448–468 (VATP…IAPL), and 479–499 (MALP…YFGL).

It belongs to the NhaB Na(+)/H(+) (TC 2.A.34) antiporter family.

The protein localises to the cell inner membrane. The enzyme catalyses 2 Na(+)(in) + 3 H(+)(out) = 2 Na(+)(out) + 3 H(+)(in). In terms of biological role, na(+)/H(+) antiporter that extrudes sodium in exchange for external protons. The protein is Na(+)/H(+) antiporter NhaB of Pseudoalteromonas atlantica (strain T6c / ATCC BAA-1087).